Here is a 468-residue protein sequence, read N- to C-terminus: 6-phospho-beta-galactosidase (468 aa).

Residues glutamine 19, histidine 116, asparagine 159, glutamate 160, and asparagine 297 each contribute to the D-galactose 6-phosphate site. Glutamate 160 serves as the catalytic Proton donor. Glutamate 375 functions as the Nucleophile in the catalytic mechanism. Positions 428, 429, 435, and 437 each coordinate D-galactose 6-phosphate.

Belongs to the glycosyl hydrolase 1 family.

It catalyses the reaction a 6-phospho-beta-D-galactoside + H2O = D-galactose 6-phosphate + an alcohol. Its pathway is carbohydrate metabolism; lactose degradation; D-galactose 6-phosphate and beta-D-glucose from lactose 6-phosphate: step 1/1. The protein is 6-phospho-beta-galactosidase of Streptococcus agalactiae serotype III (strain NEM316).